A 352-amino-acid polypeptide reads, in one-letter code: Tubby-like F-box protein 10 (352 aa).

The span at 1-11 (MAAVREPREEA) shows a compositional bias: basic and acidic residues. The disordered stretch occupies residues 1 to 23 (MAAVREPREEAAVGEGEGEEEGR). Residues 22 to 78 (GRWGGLLPELVEEVVRRVEASGGERWPARKDLVSCACVCRRWREAAAAVVRPLPESG) enclose the F-box domain.

The protein belongs to the TUB family. As to expression, ubiquitous.

The sequence is that of Tubby-like F-box protein 10 (TULP10) from Oryza sativa subsp. japonica (Rice).